The following is a 309-amino-acid chain: Homoserine kinase (309 aa).

91 to 101 contacts ATP; it reads PIGSGLGSSAC.

The protein belongs to the GHMP kinase family. Homoserine kinase subfamily.

The protein resides in the cytoplasm. The enzyme catalyses L-homoserine + ATP = O-phospho-L-homoserine + ADP + H(+). The protein operates within amino-acid biosynthesis; L-threonine biosynthesis; L-threonine from L-aspartate: step 4/5. Catalyzes the ATP-dependent phosphorylation of L-homoserine to L-homoserine phosphate. The polypeptide is Homoserine kinase (Citrobacter koseri (strain ATCC BAA-895 / CDC 4225-83 / SGSC4696)).